A 506-amino-acid chain; its full sequence is Galactose/methyl galactoside import ATP-binding protein MglA (506 aa).

ABC transporter domains follow at residues Leu-14 to Glu-249 and Val-260 to Leu-506. Gly-46–Ser-53 is a binding site for ATP.

Belongs to the ABC transporter superfamily. Galactose/methyl galactoside importer (TC 3.A.1.2.3) family. The complex is composed of one ATP-binding protein (MglA), two transmembrane proteins (MglC) and a solute-binding protein (MglB).

The protein resides in the cell inner membrane. It catalyses the reaction D-galactose(out) + ATP + H2O = D-galactose(in) + ADP + phosphate + H(+). The enzyme catalyses methyl beta-D-galactoside(out) + ATP + H2O = methyl beta-D-galactoside(in) + ADP + phosphate + H(+). Part of the ABC transporter complex MglABC involved in galactose/methyl galactoside import. Responsible for energy coupling to the transport system. This is Galactose/methyl galactoside import ATP-binding protein MglA from Haemophilus influenzae (strain 86-028NP).